Here is a 348-residue protein sequence, read N- to C-terminus: MNPTVLTIIISSMGLGTTLTFIGSHWLLVWMGLEINTLAIIPLMIRQHHPRAVEATTKYFITQATASALLLFASVTNAWTSGEWSLIEMLNPTSATLATAALALKIGLAPLHFWLPEVLQGLDLTTGLILATWQKLAPFAILLQLSPLLNSNLLLLFGVTSTIVGGWGGLNQTQLRKILAYSSIANLGWMITILHYSPSLTLLNLILYMFMTLTTFLLFKTFNSTKINSISSSTLKSPLMSVIALMTLLSLGGLPPLSGFMPKWLILQELTKQSLIIPATIMALMALLSLFFYLRLCYATTLTKAPGPINMASTWRTKSHQPTLILLTSASISIFMLPMTPLILMLMT.

Helical transmembrane passes span 3-23, 25-45, 59-79, 95-115, 149-171, 178-198, 199-219, 242-262, 274-294, and 324-344; these read PTVL…TFIG, HWLL…PLMI, YFIT…TNAW, ATLA…HFWL, LNSN…GGLN, ILAY…HYSP, SLTL…FLLF, VIAL…GFMP, SLII…FFYL, and LILL…PLIL.

It belongs to the complex I subunit 2 family.

The protein localises to the mitochondrion inner membrane. It carries out the reaction a ubiquinone + NADH + 5 H(+)(in) = a ubiquinol + NAD(+) + 4 H(+)(out). Functionally, core subunit of the mitochondrial membrane respiratory chain NADH dehydrogenase (Complex I) that is believed to belong to the minimal assembly required for catalysis. Complex I functions in the transfer of electrons from NADH to the respiratory chain. The immediate electron acceptor for the enzyme is believed to be ubiquinone. The chain is NADH-ubiquinone oxidoreductase chain 2 (MT-ND2) from Scyliorhinus canicula (Small-spotted catshark).